The primary structure comprises 284 residues: Serine/threonine-protein phosphatase Pgam5, mitochondrial (284 aa).

Residues 8–24 (LGVPTATLAVGTLLLGD) traverse the membrane as a helical segment.

The protein belongs to the phosphoglycerate mutase family. BPG-dependent PGAM subfamily. Interacts with skn-1 isoforms a and c.

It is found in the mitochondrion outer membrane. It catalyses the reaction O-phospho-L-seryl-[protein] + H2O = L-seryl-[protein] + phosphate. The enzyme catalyses O-phospho-L-threonyl-[protein] + H2O = L-threonyl-[protein] + phosphate. Displays phosphatase activity for serine/threonine residues. Has apparently no phosphoglycerate mutase activity. The polypeptide is Serine/threonine-protein phosphatase Pgam5, mitochondrial (pgam-5) (Caenorhabditis elegans).